We begin with the raw amino-acid sequence, 116 residues long: MAAIPSSGSLVATHDYYRRRLGSTSSNSSCGSAEYPGEAIPHHPGLPKADPGHWWASFFFGKSTLPFMATVLESPEHSESAQASTSTITCDLAQKAVGKQQPSGQPGKTTAGPRPE.

The residue at position 9 (serine 9) is a Phosphoserine. Disordered regions lie at residues 22–47 and 92–116; these read GSTS…PGLP and LAQK…PRPE. The span at 23-32 shows a compositional bias: low complexity; that stretch reads STSSNSSCGS.

It belongs to the PPDPF family.

In terms of biological role, probable regulator of exocrine pancreas development. This Bos taurus (Bovine) protein is Pancreatic progenitor cell differentiation and proliferation factor (PPDPF).